We begin with the raw amino-acid sequence, 228 residues long: Heptaprenylglyceryl phosphate synthase (228 aa).

Lys12 lines the sn-glycerol 1-phosphate pocket. Mg(2+)-binding residues include Asp14 and Thr40. Residues Tyr159 to Gly164, Gly189, and Gly209 to Asn210 contribute to the sn-glycerol 1-phosphate site.

Belongs to the GGGP/HepGP synthase family. Group I subfamily. As to quaternary structure, homodimer. Mg(2+) serves as cofactor.

The catalysed reaction is sn-glycerol 1-phosphate + all-trans-heptaprenyl diphosphate = 3-heptaprenyl-sn-glycero-1-phosphate + diphosphate. It functions in the pathway membrane lipid metabolism; glycerophospholipid metabolism. In terms of biological role, prenyltransferase that catalyzes in vivo the transfer of the heptaprenyl moiety of heptaprenyl pyrophosphate (HepPP; 35 carbon atoms) to the C3 hydroxyl of sn-glycerol-1-phosphate (G1P), producing heptaprenylglyceryl phosphate (HepGP). This reaction is an ether-bond-formation step in the biosynthesis of archaea-type G1P-based membrane lipids found in Bacillales. In Geobacillus sp. (strain WCH70), this protein is Heptaprenylglyceryl phosphate synthase.